The chain runs to 235 residues: MAAPAPSLWTLLLLLLLLPPPPGAHGELCRPFGEDNSIPVFCPDFCCGSCSNQYCCSDVLRKIQWNEEMCPEPESRFSTPAEETPEHLGSALKFRSSFDSDPMSGFGATVAIGVTIFVVFIATIIICFTCSCCCLYKMCCPQRPVVTNTTTTTVVHAPYPQPQPQPVAPSYPGPTYQGYHPMPPQPGMPAAPYPTQYPPPYLAQPTGPPPYHESLAGASQPPYNPTYMDSLKTIP.

An N-terminal signal peptide occupies residues methionine 1–glycine 26. At glutamate 27–glycine 105 the chain is on the extracellular side. Residues phenylalanine 106–isoleucine 126 traverse the membrane as a helical segment. At cysteine 127–proline 235 the chain is on the cytoplasmic side. The segment at alanine 157–proline 235 is disordered. Pro residues-rich tracts occupy residues tyrosine 159–proline 172 and proline 181–tyrosine 211.

It belongs to the shisa family. In terms of assembly, interacts with PDCD6; PDCD6 can stabilize SHISA5. In terms of tissue distribution, spleen and thymus.

The protein localises to the endoplasmic reticulum membrane. It is found in the nucleus membrane. Its function is as follows. Can induce apoptosis in a caspase-dependent manner and plays a role in p53/TP53-dependent apoptosis. This Mus musculus (Mouse) protein is Protein shisa-5 (Shisa5).